The primary structure comprises 396 residues: 1-deoxy-D-xylulose 5-phosphate reductoisomerase (396 aa).

5 residues coordinate NADPH: T13, G14, S15, I16, and N127. 1-deoxy-D-xylulose 5-phosphate is bound at residue K128. E129 lines the NADPH pocket. D153 is a Mn(2+) binding site. 1-deoxy-D-xylulose 5-phosphate is bound by residues S154, E155, S184, and H207. E155 provides a ligand contact to Mn(2+). Residue G213 coordinates NADPH. 1-deoxy-D-xylulose 5-phosphate is bound by residues S220, N225, K226, and E229. E229 is a binding site for Mn(2+).

It belongs to the DXR family. It depends on Mg(2+) as a cofactor. The cofactor is Mn(2+).

The catalysed reaction is 2-C-methyl-D-erythritol 4-phosphate + NADP(+) = 1-deoxy-D-xylulose 5-phosphate + NADPH + H(+). It participates in isoprenoid biosynthesis; isopentenyl diphosphate biosynthesis via DXP pathway; isopentenyl diphosphate from 1-deoxy-D-xylulose 5-phosphate: step 1/6. Functionally, catalyzes the NADPH-dependent rearrangement and reduction of 1-deoxy-D-xylulose-5-phosphate (DXP) to 2-C-methyl-D-erythritol 4-phosphate (MEP). The polypeptide is 1-deoxy-D-xylulose 5-phosphate reductoisomerase (Pseudomonas fluorescens (strain Pf0-1)).